Consider the following 757-residue polypeptide: Elongation factor G, mitochondrial (757 aa).

The N-terminal 39 residues, 1-39 (MLLVPRVPVVMQGKCGLLKISRPLQGSLSRGFHFSRAHR), are a transit peptide targeting the mitochondrion. Positions 65-346 (QKLRNIGISA…AIVDYLPNPS (282 aa)) constitute a tr-type G domain. GTP contacts are provided by residues 74-81 (AHIDSGKT), 145-149 (DTPGH), and 199-202 (NKMD).

The protein belongs to the TRAFAC class translation factor GTPase superfamily. Classic translation factor GTPase family. EF-G/EF-2 subfamily.

It is found in the mitochondrion. Its pathway is protein biosynthesis; polypeptide chain elongation. Mitochondrial GTPase that catalyzes the GTP-dependent ribosomal translocation step during translation elongation. During this step, the ribosome changes from the pre-translocational (PRE) to the post-translocational (POST) state as the newly formed A-site-bound peptidyl-tRNA and P-site-bound deacylated tRNA move to the P and E sites, respectively. Catalyzes the coordinated movement of the two tRNA molecules, the mRNA and conformational changes in the ribosome. The polypeptide is Elongation factor G, mitochondrial (Candida glabrata (strain ATCC 2001 / BCRC 20586 / JCM 3761 / NBRC 0622 / NRRL Y-65 / CBS 138) (Yeast)).